Reading from the N-terminus, the 393-residue chain is Bifunctional enzyme IspD/IspF (393 aa).

Positions 1–234 are 2-C-methyl-D-erythritol 4-phosphate cytidylyltransferase; that stretch reads MTISQRTAAI…ARLAAQLGDI (234 aa). The tract at residues 235–393 is 2-C-methyl-D-erythritol 2,4-cyclodiphosphate synthase; sequence RTGTGYDVHA…SATIRLPWSA (159 aa). Residues Asp241 and His243 each coordinate a divalent metal cation. 4-CDP-2-C-methyl-D-erythritol 2-phosphate is bound by residues 241-243 and 267-268; these read DVH and HS. Residue His275 participates in a divalent metal cation binding. 4-CDP-2-C-methyl-D-erythritol 2-phosphate-binding positions include 289–291, 365–368, Phe372, and Arg375; these read DIG and TTSE.

In the N-terminal section; belongs to the IspD/TarI cytidylyltransferase family. IspD subfamily. It in the C-terminal section; belongs to the IspF family. A divalent metal cation is required as a cofactor.

The enzyme catalyses 2-C-methyl-D-erythritol 4-phosphate + CTP + H(+) = 4-CDP-2-C-methyl-D-erythritol + diphosphate. It catalyses the reaction 4-CDP-2-C-methyl-D-erythritol 2-phosphate = 2-C-methyl-D-erythritol 2,4-cyclic diphosphate + CMP. It functions in the pathway isoprenoid biosynthesis; isopentenyl diphosphate biosynthesis via DXP pathway; isopentenyl diphosphate from 1-deoxy-D-xylulose 5-phosphate: step 2/6. The protein operates within isoprenoid biosynthesis; isopentenyl diphosphate biosynthesis via DXP pathway; isopentenyl diphosphate from 1-deoxy-D-xylulose 5-phosphate: step 4/6. Bifunctional enzyme that catalyzes the formation of 4-diphosphocytidyl-2-C-methyl-D-erythritol from CTP and 2-C-methyl-D-erythritol 4-phosphate (MEP) (IspD), and catalyzes the conversion of 4-diphosphocytidyl-2-C-methyl-D-erythritol 2-phosphate (CDP-ME2P) to 2-C-methyl-D-erythritol 2,4-cyclodiphosphate (ME-CPP) with a corresponding release of cytidine 5-monophosphate (CMP) (IspF). The sequence is that of Bifunctional enzyme IspD/IspF from Bradyrhizobium sp. (strain BTAi1 / ATCC BAA-1182).